The chain runs to 2415 residues: Bradyzoite-formation deficient protein 1 (2415 aa).

3 disordered regions span residues 369–392 (WNKP…PEET), 418–481 (HLTS…PYTR), and 761–845 (DGCG…QDTQ). The segment covering 419–429 (LTSRQHPNPRP) has biased composition (basic residues). Residues 430–443 (RMKEEHCGREREVL) are compositionally biased toward basic and acidic residues. Composition is skewed to polar residues over residues 444–460 (SSEQ…TPAS) and 832–843 (PRTTSSSSYGQD). One can recognise a Myb-like domain in the interval 921–968 (WSAEEDASLAELVSRKGFKWALISSQLTGAFGIPRTGKQCRERWFNHV). The HTH myb-type domain maps to 969-1023 (NPEVKKGDWSAEEDAMILMLQNELGNRWATIAKKLRGRTENAVKNRFISLSNARL). Positions 996–1019 (WATIAKKLRGRTENAVKNRFISLS) form a DNA-binding region, H-T-H motif. Disordered regions lie at residues 1027–1050 (RPKR…KSSG), 1098–1127 (VSRP…LKNT), 1206–1270 (NDER…NGLD), 1319–1343 (PACD…AQRQ), 1501–1521 (QLWT…QQHE), 1905–1932 (VSRD…TSQS), 1959–2013 (RVRW…GSTA), and 2161–2222 (GTDA…EMQD). Residues 1036-1050 (DCFSNRRTGSGKSSG) show a composition bias toward polar residues. Basic and acidic residues predominate over residues 1227–1237 (AHEHADIARSD). Composition is skewed to polar residues over residues 1327–1343 (PQNS…AQRQ) and 1501–1520 (QLWT…NQQH). Residues 1974–1985 (SVSSGASNSATT) show a composition bias toward polar residues. The segment covering 2181-2197 (QAHRRDGHDMQRVQRCD) has biased composition (basic and acidic residues).

It is found in the nucleus. In terms of biological role, master transcription factor that controls the differentiation of acute-stage tachyzoite parasites into chronic-stage bradyzoites, which form intracellular cysts resistant to immune clearance and existing therapies. Sufficient to drive differentiation into bradyzoite stage. Following translation in response to stress conditions, binds to the promoter of many chronic stage-specific genes and promotes their expression, thereby driving differentiation into bradyzoites. The protein is Bradyzoite-formation deficient protein 1 of Toxoplasma gondii (strain ATCC 50611 / Me49).